The chain runs to 332 residues: Methionyl-tRNA formyltransferase (332 aa).

124–127 provides a ligand contact to (6S)-5,6,7,8-tetrahydrofolate; it reads SLLP.

This sequence belongs to the Fmt family.

It catalyses the reaction L-methionyl-tRNA(fMet) + (6R)-10-formyltetrahydrofolate = N-formyl-L-methionyl-tRNA(fMet) + (6S)-5,6,7,8-tetrahydrofolate + H(+). In terms of biological role, attaches a formyl group to the free amino group of methionyl-tRNA(fMet). The formyl group appears to play a dual role in the initiator identity of N-formylmethionyl-tRNA by promoting its recognition by IF2 and preventing the misappropriation of this tRNA by the elongation apparatus. This chain is Methionyl-tRNA formyltransferase, found in Polynucleobacter necessarius subsp. necessarius (strain STIR1).